Here is a 107-residue protein sequence, read N- to C-terminus: Phosphoribosyl-ATP pyrophosphatase (107 aa).

The protein belongs to the PRA-PH family.

It localises to the cytoplasm. It catalyses the reaction 1-(5-phospho-beta-D-ribosyl)-ATP + H2O = 1-(5-phospho-beta-D-ribosyl)-5'-AMP + diphosphate + H(+). The protein operates within amino-acid biosynthesis; L-histidine biosynthesis; L-histidine from 5-phospho-alpha-D-ribose 1-diphosphate: step 2/9. The chain is Phosphoribosyl-ATP pyrophosphatase (hisE) from Agrobacterium fabrum (strain C58 / ATCC 33970) (Agrobacterium tumefaciens (strain C58)).